Reading from the N-terminus, the 257-residue chain is Thiazole synthase (257 aa).

The active-site Schiff-base intermediate with DXP is the lysine 97. Residues glycine 158, 184–185, and 206–207 each bind 1-deoxy-D-xylulose 5-phosphate; these read AG and NT.

The protein belongs to the ThiG family. In terms of assembly, homotetramer. Forms heterodimers with either ThiH or ThiS.

Its subcellular location is the cytoplasm. It carries out the reaction [ThiS sulfur-carrier protein]-C-terminal-Gly-aminoethanethioate + 2-iminoacetate + 1-deoxy-D-xylulose 5-phosphate = [ThiS sulfur-carrier protein]-C-terminal Gly-Gly + 2-[(2R,5Z)-2-carboxy-4-methylthiazol-5(2H)-ylidene]ethyl phosphate + 2 H2O + H(+). It participates in cofactor biosynthesis; thiamine diphosphate biosynthesis. Functionally, catalyzes the rearrangement of 1-deoxy-D-xylulose 5-phosphate (DXP) to produce the thiazole phosphate moiety of thiamine. Sulfur is provided by the thiocarboxylate moiety of the carrier protein ThiS. In vitro, sulfur can be provided by H(2)S. The polypeptide is Thiazole synthase (Desulforamulus reducens (strain ATCC BAA-1160 / DSM 100696 / MI-1) (Desulfotomaculum reducens)).